The chain runs to 485 residues: 28S rRNA (uridine-N(3))-methyltransferase (485 aa).

S-adenosyl-L-methionine is bound by residues Arg-296, Gly-318, and Asn-347.

The protein belongs to the class IV-like SAM-binding methyltransferase superfamily.

It localises to the nucleus. The enzyme catalyses uridine in 28S rRNA + S-adenosyl-L-methionine = N(3)-methyluridine in 28S rRNA + S-adenosyl-L-homocysteine + H(+). Functionally, S-adenosyl-L-methionine-dependent methyltransferase that specifically methylates the uridine in position 3485 of 28S rRNA. The chain is 28S rRNA (uridine-N(3))-methyltransferase from Drosophila melanogaster (Fruit fly).